A 532-amino-acid polypeptide reads, in one-letter code: Glucose-6-phosphate isomerase (532 aa).

Catalysis depends on Glu330, which acts as the Proton donor. Catalysis depends on residues His359 and Lys461.

Belongs to the GPI family.

The protein localises to the cytoplasm. The catalysed reaction is alpha-D-glucose 6-phosphate = beta-D-fructose 6-phosphate. It participates in carbohydrate biosynthesis; gluconeogenesis. Its pathway is carbohydrate degradation; glycolysis; D-glyceraldehyde 3-phosphate and glycerone phosphate from D-glucose: step 2/4. Catalyzes the reversible isomerization of glucose-6-phosphate to fructose-6-phosphate. This is Glucose-6-phosphate isomerase from Synechococcus sp. (strain CC9605).